The sequence spans 483 residues: Membrane-bound lytic murein transglycosylase F (483 aa).

Positions 1 to 18 (MKGLVIRISVALALLLWA) are cleaved as a signal peptide. The non-LT domain stretch occupies residues 19–270 (VDMVFPWQQI…RIEEKYFSHI (252 aa)). Residues 272–483 (QFDYVDIKSY…IMITPQNSQD (212 aa)) are LT domain. Glu315 is a catalytic residue.

This sequence in the N-terminal section; belongs to the bacterial solute-binding protein 3 family. In the C-terminal section; belongs to the transglycosylase Slt family.

It localises to the cell outer membrane. The catalysed reaction is Exolytic cleavage of the (1-&gt;4)-beta-glycosidic linkage between N-acetylmuramic acid (MurNAc) and N-acetylglucosamine (GlcNAc) residues in peptidoglycan, from either the reducing or the non-reducing ends of the peptidoglycan chains, with concomitant formation of a 1,6-anhydrobond in the MurNAc residue.. Murein-degrading enzyme that degrades murein glycan strands and insoluble, high-molecular weight murein sacculi, with the concomitant formation of a 1,6-anhydromuramoyl product. Lytic transglycosylases (LTs) play an integral role in the metabolism of the peptidoglycan (PG) sacculus. Their lytic action creates space within the PG sacculus to allow for its expansion as well as for the insertion of various structures such as secretion systems and flagella. This chain is Membrane-bound lytic murein transglycosylase F, found in Actinobacillus succinogenes (strain ATCC 55618 / DSM 22257 / CCUG 43843 / 130Z).